Consider the following 321-residue polypeptide: MLEEDAAGPDQLGPNDLDRQIEIAMRCELICETQVKSICAKVREILIEEANVQVIDTPVTICGDIHGQFHDLMELFRVGGSPPNTNYLFLGDYVDRGYNSVETFILLMLLKCRYPDRITLIRGNHESRQITQVYGFYDECVRKYGSGQVWKHCTEIFDYLSLAAVIDGKLFCVHGGLSPSIATLDQIRVLDRKIEVPHEGPMCDLLWSDPEEGCSGWGISPRGAGYLFGGDAAELFCENNDFLRICRAHQLVMEGYKLHFRKRVVTVWSAPNYCYRCGNVAAIMEVTEENIDSDPVFEVFEAATVENRGEPKKQPIAQYFL.

Residues Asp-64, His-66, Asp-92, and Asn-124 each contribute to the Mn(2+) site. The Proton donor role is filled by His-125. Mn(2+) contacts are provided by His-174 and His-249.

Belongs to the PPP phosphatase family. PP-4 (PP-X) subfamily. As to quaternary structure, serine/threonine-protein phosphatase 4 (PP4) occurs in different assemblies of the catalytic and one or more regulatory subunits. Mn(2+) is required as a cofactor.

It carries out the reaction O-phospho-L-seryl-[protein] + H2O = L-seryl-[protein] + phosphate. The catalysed reaction is O-phospho-L-threonyl-[protein] + H2O = L-threonyl-[protein] + phosphate. In terms of biological role, protein phosphatase which seems to be involved in larval development but not essential for embryogenesis. In Caenorhabditis elegans, this protein is Serine/threonine-protein phosphatase 4 catalytic subunit 2.